The sequence spans 656 residues: Chaperone protein DnaK (656 aa).

Disordered stretches follow at residues 488-532 and 579-656; these read EMQE…DAVD and YQQQ…DEDE. The segment covering 492-513 has biased composition (basic and acidic residues); it reads EAEKHAEEDEKRRERIEARNEA. The span at 523-532 shows a compositional bias: acidic residues; it reads LLDENEDAVD. A compositionally biased stretch (gly residues) spans 584–635; that stretch reads GEGGAGAGAGAAGGMGGAGPGGMGGAGPGGMGGAGPGGMGGAGPGAGAGQQG. A compositionally biased stretch (acidic residues) spans 636–656; sequence DGEEFVDADFEDVDDEDDEDE.

This sequence belongs to the heat shock protein 70 family.

Acts as a chaperone. The protein is Chaperone protein DnaK of Natronomonas pharaonis (strain ATCC 35678 / DSM 2160 / CIP 103997 / JCM 8858 / NBRC 14720 / NCIMB 2260 / Gabara) (Halobacterium pharaonis).